The chain runs to 264 residues: MRVYLDLMQKILDEGTVKSDRTGTGTVSLFGHQMRFNLAQGFPLVTTKKCHLRSIIHELLWFLNGDTNTAYLKEQGVSIWDEWADENGDLGPVYGAQWRSWPAADGAVIDQIQRAVDDIKHNPDSRRIIVSAWNVGELDKMALAPCHAFFQFYVADGKLSCQLYQRSCDVFLGLPFNIASYALLTHMMAQQCDLEVGDFVWTGGDVHLYSNHMEQTALQLSREPRPLPQLAIKRKPDSIFDYRFEDFEILGYDPHPGIKAPVAI.

R21 serves as a coordination point for dUMP. H51 is a (6R)-5,10-methylene-5,6,7,8-tetrahydrofolate binding site. 126–127 (RR) is a dUMP binding site. C146 functions as the Nucleophile in the catalytic mechanism. DUMP contacts are provided by residues 166-169 (RSCD), N177, and 207-209 (HLY). A (6R)-5,10-methylene-5,6,7,8-tetrahydrofolate-binding site is contributed by D169. A263 is a binding site for (6R)-5,10-methylene-5,6,7,8-tetrahydrofolate.

The protein belongs to the thymidylate synthase family. Bacterial-type ThyA subfamily. In terms of assembly, homodimer.

The protein localises to the cytoplasm. The catalysed reaction is dUMP + (6R)-5,10-methylene-5,6,7,8-tetrahydrofolate = 7,8-dihydrofolate + dTMP. Its pathway is pyrimidine metabolism; dTTP biosynthesis. Functionally, catalyzes the reductive methylation of 2'-deoxyuridine-5'-monophosphate (dUMP) to 2'-deoxythymidine-5'-monophosphate (dTMP) while utilizing 5,10-methylenetetrahydrofolate (mTHF) as the methyl donor and reductant in the reaction, yielding dihydrofolate (DHF) as a by-product. This enzymatic reaction provides an intracellular de novo source of dTMP, an essential precursor for DNA biosynthesis. In Aeromonas salmonicida (strain A449), this protein is Thymidylate synthase.